Reading from the N-terminus, the 560-residue chain is DNA-directed primase/polymerase protein (560 aa).

The stretch at 1–22 (MNRKWEAKLKQIEERASHYERK) forms a coiled coil. Substrate contacts are provided by residues R76, 114–116 (DLE), and 165–169 (KFSRH). 2 residues coordinate Mn(2+): D114 and E116. The interval 203-223 (EDDDSAPETTGHGFPHFSEAP) is disordered. S255 carries the phosphoserine modification. Substrate-binding positions include 288-291 (RNFR) and K297. Residues C419, H426, C446, and C451 each contribute to the Zn(2+) site. The short motif at 419-452 (CENIGRAHKSNNIMILVDLKNEVWYQKCHDPVCK) is the Zinc knuckle motif element. The tract at residues 480 to 507 (TTDEADETRSNETQNPHKPSPSRLSTGA) is disordered. Residues 481–560 (TDEADETRSN…DELIIEVLQE (80 aa)) are interaction with RPA1. Residues 490 to 507 (NETQNPHKPSPSRLSTGA) are compositionally biased toward polar residues. 2 consecutive short sequence motifs (RPA1-binding motif) follow at residues 513–527 (WDNG…EATE) and 548–556 (EIPDELIIE).

The protein belongs to the eukaryotic-type primase small subunit family. As to quaternary structure, interacts with RPA1; leading to recruitment to chromatin and stimulate DNA primase activity. Interacts with SSBP1. Interacts with POLDIP2; leading to enhance DNA polymerase activity. Mn(2+) serves as cofactor.

It localises to the nucleus. Its subcellular location is the mitochondrion matrix. It is found in the chromosome. It carries out the reaction ssDNA + n NTP = ssDNA/pppN(pN)n-1 hybrid + (n-1) diphosphate.. It catalyses the reaction DNA(n) + a 2'-deoxyribonucleoside 5'-triphosphate = DNA(n+1) + diphosphate. In terms of biological role, DNA primase and DNA polymerase required to tolerate replication-stalling lesions by bypassing them. Required to facilitate mitochondrial and nuclear replication fork progression by initiating de novo DNA synthesis using dNTPs and acting as an error-prone DNA polymerase able to bypass certain DNA lesions. Shows a high capacity to tolerate DNA damage lesions such as 8oxoG and abasic sites in DNA. Provides different translesion synthesis alternatives when DNA replication is stalled: able to synthesize DNA primers downstream of lesions, such as ultraviolet (UV) lesions, R-loops and G-quadruplexes, to allow DNA replication to continue. Can also realign primers ahead of 'unreadable lesions' such as abasic sites and 6-4 photoproduct (6-4 pyrimidine-pyrimidinone), thereby skipping the lesion. Repriming avoids fork degradation while leading to accumulation of internal ssDNA gaps behind the forks. Also able to incorporate nucleotides opposite DNA lesions such as 8oxoG, like a regular translesion synthesis DNA polymerase. Also required for reinitiating stalled forks after UV damage during nuclear DNA replication. Required for mitochondrial DNA (mtDNA) synthesis and replication, by reinitiating synthesis after UV damage or in the presence of chain-terminating nucleotides. Prevents APOBEC family-mediated DNA mutagenesis by repriming downstream of abasic site to prohibit error-prone translesion synthesis. Has non-overlapping function with POLH. In addition to its role in DNA damage response, also required to maintain efficient nuclear and mitochondrial DNA replication in unperturbed cells. The chain is DNA-directed primase/polymerase protein from Homo sapiens (Human).